We begin with the raw amino-acid sequence, 540 residues long: Synaptotagmin-3 (540 aa).

The helical transmembrane segment at 9-29 (GIIGFVIGIPIGLILGFFVLI) threads the bilayer. Positions 67-249 (DYERVDWFNK…WPQVLEIPIL (183 aa)) constitute an SMP-LTD domain. Positions 227-509 (QETIKRQVSS…ELGHVDINLD (283 aa)) are phospholipid binding. 2 C2 domains span residues 240-363 (WPQV…EFNL) and 401-521 (RKES…NQKY). Ca(2+) contacts are provided by D277, D283, D333, D335, and D341.

Belongs to the synaptotagmin family. Ca(2+) is required as a cofactor.

The protein localises to the membrane. Its function is as follows. May be involved in membrane trafficking. The chain is Synaptotagmin-3 (SYT3) from Arabidopsis thaliana (Mouse-ear cress).